A 216-amino-acid chain; its full sequence is GTP cyclohydrolase 1 (216 aa).

Residues 1–33 are disordered; sequence MPQARGEGATPPTSLPNPSLKGVPLPDNPNNLE. A compositionally biased stretch (low complexity) spans 24–33; that stretch reads PLPDNPNNLE. Zn(2+) contacts are provided by cysteine 102, histidine 105, and cysteine 173.

The protein belongs to the GTP cyclohydrolase I family. Toroid-shaped homodecamer, composed of two pentamers of five dimers.

The enzyme catalyses GTP + H2O = 7,8-dihydroneopterin 3'-triphosphate + formate + H(+). It participates in cofactor biosynthesis; 7,8-dihydroneopterin triphosphate biosynthesis; 7,8-dihydroneopterin triphosphate from GTP: step 1/1. The polypeptide is GTP cyclohydrolase 1 (folE) (Deinococcus radiodurans (strain ATCC 13939 / DSM 20539 / JCM 16871 / CCUG 27074 / LMG 4051 / NBRC 15346 / NCIMB 9279 / VKM B-1422 / R1)).